A 336-amino-acid chain; its full sequence is MNLYPWLQHSYKQIIYPHYINKGHHSIILESHKNIGITCLAKHISLWLLCQKKNKSIYHCKTCHSCQLMNSKNHPDWHYFGSNTCLSKNSSKTIGVNEVRNFTNTIFNSAQQGQNKIVYIPNIKKLTEFAINSLLKIIEEPPQNTYFLLINYLPHKIITTLRSRCIIHNLYGPTKENRIEWLKEQNINTNQKIHMSMLYSNEISFISKCKHSLFFLYQERLNFFETLLTSFQEKNFLKMLNVLNNKKCLDQIFIWICGIILDSIKWKHDINTIIINTDQTKIIQILASNFSILSLDNSYKSWIYCYNNIKNIPGINIELLFVKQLLYWEEILNIFN.

In terms of assembly, DNA polymerase III contains a core (composed of alpha, epsilon and theta chains) that associates with a tau subunit. This core dimerizes to form the POLIII' complex. PolIII' associates with the gamma complex (composed of gamma, delta, delta', psi and chi chains) and with the beta chain to form the complete DNA polymerase III complex.

The catalysed reaction is DNA(n) + a 2'-deoxyribonucleoside 5'-triphosphate = DNA(n+1) + diphosphate. Functionally, DNA polymerase III is a complex, multichain enzyme responsible for most of the replicative synthesis in bacteria. This DNA polymerase also exhibits 3' to 5' exonuclease activity. The polypeptide is DNA polymerase III subunit delta' (holB) (Buchnera aphidicola subsp. Baizongia pistaciae (strain Bp)).